The following is a 571-amino-acid chain: Chitin-inducible gibberellin-responsive protein 1 (571 aa).

A compositionally biased stretch (polar residues) spans 61 to 77; that stretch reads TNTPDNQSSTETISAQP. Disordered stretches follow at residues 61-80 and 151-180; these read TNTPDNQSSTETISAQPISP and QRSRTWSHESRQPLPGVGRSQFASGGYPTA. The GRAS domain occupies 192–571; that stretch reads ELREDPQIIV…RKLISASAWH (380 aa). The segment at 199–259 is leucine repeat I (LRI); the sequence is IIVKQLLTRC…VARHGNSGTN (61 aa). A VHIID region spans residues 278–343; sequence MRILYNICPY…GGPPRVRITG (66 aa). The VHIID signature appears at 309-313; that stretch reads IHIID. The tract at residues 359 to 391 is leucine repeat II (LRII); the sequence is IVGKMLKSMSEEFKIPLEFTPLSVYATQVTKEM. The PFYRE stretch occupies residues 400-494; the sequence is LSVNFTLQLH…QHCLAKDIVN (95 aa). The segment at 497-571 is SAW; sequence ACEGKDRVER…RKLISASAWH (75 aa).

Belongs to the GRAS family.

Its subcellular location is the nucleus. May play a regulatory role in the early step of oligosaccharide elicitor response, downstream of the membrane-associated high-affinity chitin-binding protein. This Oryza sativa subsp. japonica (Rice) protein is Chitin-inducible gibberellin-responsive protein 1 (CIGR1).